The following is a 1879-amino-acid chain: Protein TIC 214 (1879 aa).

Transmembrane regions (helical) follow at residues 18–38 (IINSVVVVGLYYGFLTTFSIG), 64–84 (FITGQLMMFISIYYAPLHLAL), 87–107 (PYTITVLALPYLLFHFFWTNP), 124–144 (LSIQCVFLNNLIFQLFNHFIL), 172–192 (VGWLIGHILFMKSVGLILVWI), and 218–238 (IAPIFSIILFITWVYYLGRIP). Disordered regions lie at residues 245-305 (ETSK…IDET) and 586-702 (ISTS…DEPM). 2 stretches are compositionally biased toward acidic residues: residues 253–268 (AETEESEEETDVEIET) and 295–305 (EKEDPDKIDET). Low complexity predominate over residues 586-688 (ISTSTPTSTP…SIPASTSTST (103 aa)). Basic and acidic residues predominate over residues 691–701 (IKSKDEPKDEP).

Belongs to the TIC214 family. Part of the Tic complex.

It is found in the plastid. The protein localises to the chloroplast inner membrane. Involved in protein precursor import into chloroplasts. May be part of an intermediate translocation complex acting as a protein-conducting channel at the inner envelope. The sequence is that of Protein TIC 214 from Cucumis sativus (Cucumber).